Consider the following 850-residue polypeptide: Endoribonuclease ysh-1 (850 aa).

6 residues coordinate Zn(2+): His-83, His-85, Asp-87, His-88, His-173, and Asp-194. The Proton donor role is filled by His-442. His-464 lines the Zn(2+) pocket. Disordered stretches follow at residues 685-708 (VKRS…PHSH) and 732-784 (SPIV…EQQL). Residues 744 to 754 (PTTKAITSPSE) show a composition bias toward polar residues. A compositionally biased stretch (basic and acidic residues) spans 755–766 (ETAKSSDVKSDA). The segment covering 767-781 (DADASMDVSEEDEDE) has biased composition (acidic residues).

This sequence belongs to the metallo-beta-lactamase superfamily. RNA-metabolizing metallo-beta-lactamase-like family. CPSF2/YSH1 subfamily.

It is found in the nucleus. In terms of biological role, component of the cleavage factor I (CF I) involved in pre-mRNA 3'-end processing. The sequence is that of Endoribonuclease ysh-1 (ysh-1) from Neurospora crassa (strain ATCC 24698 / 74-OR23-1A / CBS 708.71 / DSM 1257 / FGSC 987).